Consider the following 443-residue polypeptide: Protein FAM83A (443 aa).

The segment at 311-403 (DSGVSVMTDS…YYQRNYAPDS (93 aa)) is disordered. Over residues 315 to 326 (SVMTDSTPESVN) the composition is skewed to polar residues. 2 stretches are compositionally biased toward low complexity: residues 327 to 344 (TTSEPFSSTSTASISNDS) and 388 to 399 (SNYQPNYYQRNY).

Belongs to the FAM83 family.

Its subcellular location is the cytoplasm. Its function is as follows. May function in the epidermal growth factor receptor/EGFR signaling pathway. The chain is Protein FAM83A from Xenopus laevis (African clawed frog).